The following is a 147-amino-acid chain: Spermidine export protein MdtJ (147 aa).

Helical transmembrane passes span 1–21 (MIYW…TLSM), 31–51 (TGHI…SLAV), 54–74 (VALG…ITIF), and 81–101 (ETLS…ILLV). A compositionally biased stretch (basic residues) spans 105-117 (TRKPKQPNRHRGN). The disordered stretch occupies residues 105 to 147 (TRKPKQPNRHRGNRPPSVQGLKTQTTGHHKGVAVESGEHHAAA).

This sequence belongs to the drug/metabolite transporter (DMT) superfamily. Small multidrug resistance (SMR) (TC 2.A.7.1) family. MdtJ subfamily. In terms of assembly, forms a complex with MdtI.

The protein localises to the cell inner membrane. Its function is as follows. Catalyzes the excretion of spermidine. This Yersinia pseudotuberculosis serotype O:3 (strain YPIII) protein is Spermidine export protein MdtJ.